Here is a 242-residue protein sequence, read N- to C-terminus: Glucosamine-6-phosphate deaminase (242 aa).

Asp-67 functions as the Proton acceptor; for enolization step in the catalytic mechanism. Residue Asn-136 is the For ring-opening step of the active site. His-138 (proton acceptor; for ring-opening step) is an active-site residue. Residue Glu-143 is the For ring-opening step of the active site.

Belongs to the glucosamine/galactosamine-6-phosphate isomerase family. NagB subfamily.

It catalyses the reaction alpha-D-glucosamine 6-phosphate + H2O = beta-D-fructose 6-phosphate + NH4(+). It participates in amino-sugar metabolism; N-acetylneuraminate degradation; D-fructose 6-phosphate from N-acetylneuraminate: step 5/5. Catalyzes the reversible isomerization-deamination of glucosamine 6-phosphate (GlcN6P) to form fructose 6-phosphate (Fru6P) and ammonium ion. The polypeptide is Glucosamine-6-phosphate deaminase (Alkaliphilus metalliredigens (strain QYMF)).